Reading from the N-terminus, the 214-residue chain is MQNLIVAVVAYLIGSVSFAVIVSAAMGLDDPRSYGSGNPGATNVLRSGNKKAAILTLIGDAFKGWLPVWFVVHYGARYGLDETSVAIASVAVFLGHLYPVFFRFKGGKGVATAAGVLLAINPILGVATLLTWLIVAFFTRYSSLAALAAAVFAPIFDGFLFGPHVIALAIVVMSSLLVWRHRGNIAKLMRGQESRIGDKKKADAAAKPAGGSDV.

5 helical membrane passes run Leu-4–Ala-24, Ala-52–Val-72, Glu-82–Phe-102, Leu-118–Phe-138, and Phe-159–Trp-179.

This sequence belongs to the PlsY family. Probably interacts with PlsX.

It is found in the cell inner membrane. The catalysed reaction is an acyl phosphate + sn-glycerol 3-phosphate = a 1-acyl-sn-glycero-3-phosphate + phosphate. It functions in the pathway lipid metabolism; phospholipid metabolism. In terms of biological role, catalyzes the transfer of an acyl group from acyl-phosphate (acyl-PO(4)) to glycerol-3-phosphate (G3P) to form lysophosphatidic acid (LPA). This enzyme utilizes acyl-phosphate as fatty acyl donor, but not acyl-CoA or acyl-ACP. The polypeptide is Glycerol-3-phosphate acyltransferase (Paraburkholderia phytofirmans (strain DSM 17436 / LMG 22146 / PsJN) (Burkholderia phytofirmans)).